The chain runs to 371 residues: Histidinol-phosphate aminotransferase (371 aa).

The residue at position 229 (lysine 229) is an N6-(pyridoxal phosphate)lysine.

Belongs to the class-II pyridoxal-phosphate-dependent aminotransferase family. Histidinol-phosphate aminotransferase subfamily. As to quaternary structure, homodimer. The cofactor is pyridoxal 5'-phosphate.

It catalyses the reaction L-histidinol phosphate + 2-oxoglutarate = 3-(imidazol-4-yl)-2-oxopropyl phosphate + L-glutamate. It participates in amino-acid biosynthesis; L-histidine biosynthesis; L-histidine from 5-phospho-alpha-D-ribose 1-diphosphate: step 7/9. The sequence is that of Histidinol-phosphate aminotransferase from Roseiflexus castenholzii (strain DSM 13941 / HLO8).